Consider the following 829-residue polypeptide: Periplasmic nitrate reductase (829 aa).

Residues 1–30 (MKMTRRAFVKANAAASAAAVAGITLPASAA) constitute a signal peptide (tat-type signal). Positions 41-97 (ITWDKAPCRFCGTGCSVLVGTQNGKVVATQGDPEAPVNKGLNCIKGYFLSKIMYGQD) constitute a 4Fe-4S Mo/W bis-MGD-type domain. The [4Fe-4S] cluster site is built by C48, C51, C55, and C83. Mo-bis(molybdopterin guanine dinucleotide) contacts are provided by residues K85, Q152, N177, C181, 214–221 (WGSNMAEM), 245–249 (STYYH), 264–266 (QSD), M374, Q378, N484, 510–511 (SD), K533, D560, and 718–727 (TGRVLEHWHT). Residue F794 participates in substrate binding. Residues N802 and K819 each coordinate Mo-bis(molybdopterin guanine dinucleotide).

It belongs to the prokaryotic molybdopterin-containing oxidoreductase family. NasA/NapA/NarB subfamily. In terms of assembly, component of the periplasmic nitrate reductase NapAB complex composed of NapA and NapB. [4Fe-4S] cluster is required as a cofactor. The cofactor is Mo-bis(molybdopterin guanine dinucleotide). Predicted to be exported by the Tat system. The position of the signal peptide cleavage has not been experimentally proven.

It localises to the periplasm. It carries out the reaction 2 Fe(II)-[cytochrome] + nitrate + 2 H(+) = 2 Fe(III)-[cytochrome] + nitrite + H2O. In terms of biological role, catalytic subunit of the periplasmic nitrate reductase complex NapAB. Receives electrons from NapB and catalyzes the reduction of nitrate to nitrite. The polypeptide is Periplasmic nitrate reductase (Vibrio parahaemolyticus serotype O3:K6 (strain RIMD 2210633)).